The following is a 235-amino-acid chain: Small ribosomal subunit protein uS2c (235 aa).

It belongs to the universal ribosomal protein uS2 family.

The protein resides in the plastid. Its subcellular location is the chloroplast. This chain is Small ribosomal subunit protein uS2c (rps2), found in Guillardia theta (Cryptophyte).